A 348-amino-acid chain; its full sequence is 3-isopropylmalate dehydrogenase (348 aa).

76-87 provides a ligand contact to NAD(+); it reads GPKWTDPNNRPE. 4 residues coordinate substrate: R94, R104, R132, and D217. Mg(2+) is bound by residues D217, D241, and D245. Residue 275–287 participates in NAD(+) binding; that stretch reads GSAPDIAGKNVAN.

Belongs to the isocitrate and isopropylmalate dehydrogenases family. LeuB type 1 subfamily. In terms of assembly, homodimer. The cofactor is Mg(2+). Mn(2+) serves as cofactor.

It is found in the cytoplasm. It catalyses the reaction (2R,3S)-3-isopropylmalate + NAD(+) = 4-methyl-2-oxopentanoate + CO2 + NADH. It participates in amino-acid biosynthesis; L-leucine biosynthesis; L-leucine from 3-methyl-2-oxobutanoate: step 3/4. Its function is as follows. Catalyzes the oxidation of 3-carboxy-2-hydroxy-4-methylpentanoate (3-isopropylmalate) to 3-carboxy-4-methyl-2-oxopentanoate. The product decarboxylates to 4-methyl-2 oxopentanoate. The polypeptide is 3-isopropylmalate dehydrogenase (Staphylococcus aureus (strain MRSA252)).